Consider the following 798-residue polypeptide: Phenylalanine--tRNA ligase beta subunit (798 aa).

Residues 39 to 148 (SKHLGGFVVG…VTLAVGASLL (110 aa)) enclose the tRNA-binding domain. A B5 domain is found at 401 to 476 (DWQKSIVLRP…RINGYDNIPA (76 aa)). The Mg(2+) site is built by Asp454, Asp460, Glu463, and Glu464. One can recognise an FDX-ACB domain in the interval 704 to 797 (SALQPLDRDF…VAKATGGELR (94 aa)).

The protein belongs to the phenylalanyl-tRNA synthetase beta subunit family. Type 1 subfamily. As to quaternary structure, tetramer of two alpha and two beta subunits. Mg(2+) is required as a cofactor.

The protein resides in the cytoplasm. It carries out the reaction tRNA(Phe) + L-phenylalanine + ATP = L-phenylalanyl-tRNA(Phe) + AMP + diphosphate + H(+). This chain is Phenylalanine--tRNA ligase beta subunit, found in Paramagnetospirillum magneticum (strain ATCC 700264 / AMB-1) (Magnetospirillum magneticum).